We begin with the raw amino-acid sequence, 435 residues long: Trigger factor (435 aa).

The 86-residue stretch at 163–248 folds into the PPIase FKBP-type domain; that stretch reads GELASVTFSA…VHAVKERKMP (86 aa).

This sequence belongs to the FKBP-type PPIase family. Tig subfamily.

The protein resides in the cytoplasm. It carries out the reaction [protein]-peptidylproline (omega=180) = [protein]-peptidylproline (omega=0). Involved in protein export. Acts as a chaperone by maintaining the newly synthesized protein in an open conformation. Functions as a peptidyl-prolyl cis-trans isomerase. This chain is Trigger factor, found in Maridesulfovibrio salexigens (strain ATCC 14822 / DSM 2638 / NCIMB 8403 / VKM B-1763) (Desulfovibrio salexigens).